Reading from the N-terminus, the 218-residue chain is Cytochrome b6 (218 aa).

A helical transmembrane segment spans residues 35–55 (IFYCLGGITLVCFLIQFATGF). A heme c-binding site is contributed by cysteine 38. Heme b contacts are provided by histidine 89 and histidine 103. 3 consecutive transmembrane segments (helical) span residues 93 to 113 (ASMM…TGGF), 119 to 139 (LTWV…VTGY), and 189 to 209 (LHTF…FLMI). The heme b site is built by histidine 190 and histidine 205.

It belongs to the cytochrome b family. PetB subfamily. In terms of assembly, the 4 large subunits of the cytochrome b6-f complex are cytochrome b6, subunit IV (17 kDa polypeptide, PetD), cytochrome f and the Rieske protein, while the 4 small subunits are PetG, PetL, PetM and PetN. The complex functions as a dimer. Heme b serves as cofactor. The cofactor is heme c.

The protein localises to the cellular thylakoid membrane. Component of the cytochrome b6-f complex, which mediates electron transfer between photosystem II (PSII) and photosystem I (PSI), cyclic electron flow around PSI, and state transitions. The sequence is that of Cytochrome b6 from Prochlorococcus marinus (strain MIT 9301).